Reading from the N-terminus, the 285-residue chain is HTH-type transcriptional regulator YofA (285 aa).

The region spanning 1-58 (MESGDLKIFQAVAREGSITKAAQMLNYVQSNVTARVHNLEEDLNIRLFHRTNRGMKLT) is the HTH lysR-type domain. The segment at residues 18–37 (ITKAAQMLNYVQSNVTARVH) is a DNA-binding region (H-T-H motif).

This sequence belongs to the LysR transcriptional regulatory family.

The protein localises to the cytoplasm. Its function is as follows. Regulates expression of the cell division protein ftsW, and is essential for cell viability during stationary phase. This is HTH-type transcriptional regulator YofA (yofA) from Bacillus subtilis (strain 168).